The following is a 731-amino-acid chain: 1,4-alpha-glucan branching enzyme GlgB (731 aa).

The active-site Nucleophile is Asp-412. The active-site Proton donor is the Glu-465.

The protein belongs to the glycosyl hydrolase 13 family. GlgB subfamily. As to quaternary structure, monomer.

It carries out the reaction Transfers a segment of a (1-&gt;4)-alpha-D-glucan chain to a primary hydroxy group in a similar glucan chain.. The protein operates within glycan biosynthesis; glycogen biosynthesis. Functionally, catalyzes the formation of the alpha-1,6-glucosidic linkages in glycogen by scission of a 1,4-alpha-linked oligosaccharide from growing alpha-1,4-glucan chains and the subsequent attachment of the oligosaccharide to the alpha-1,6 position. This is 1,4-alpha-glucan branching enzyme GlgB from Bordetella parapertussis (strain 12822 / ATCC BAA-587 / NCTC 13253).